A 407-amino-acid chain; its full sequence is Imidazolonepropionase (407 aa).

2 residues coordinate Fe(3+): His-75 and His-77. Zn(2+) is bound by residues His-75 and His-77. 4-imidazolone-5-propanoate contacts are provided by Arg-84, Tyr-142, and His-169. Tyr-142 provides a ligand contact to N-formimidoyl-L-glutamate. His-232 contacts Fe(3+). His-232 lines the Zn(2+) pocket. Gln-235 contacts 4-imidazolone-5-propanoate. Residue Asp-306 coordinates Fe(3+). Asp-306 is a binding site for Zn(2+). Positions 308 and 310 each coordinate N-formimidoyl-L-glutamate. A 4-imidazolone-5-propanoate-binding site is contributed by Thr-311.

The protein belongs to the metallo-dependent hydrolases superfamily. HutI family. The cofactor is Zn(2+). Fe(3+) serves as cofactor.

The protein localises to the cytoplasm. It catalyses the reaction 4-imidazolone-5-propanoate + H2O = N-formimidoyl-L-glutamate. It functions in the pathway amino-acid degradation; L-histidine degradation into L-glutamate; N-formimidoyl-L-glutamate from L-histidine: step 3/3. Its function is as follows. Catalyzes the hydrolytic cleavage of the carbon-nitrogen bond in imidazolone-5-propanoate to yield N-formimidoyl-L-glutamate. It is the third step in the universal histidine degradation pathway. The sequence is that of Imidazolonepropionase from Rhodococcus jostii (strain RHA1).